Here is a 128-residue protein sequence, read N- to C-terminus: Sulfurtransferase TusD (128 aa).

The Cysteine persulfide intermediate role is filled by Cys-78.

It belongs to the DsrE/TusD family. As to quaternary structure, heterohexamer, formed by a dimer of trimers. The hexameric TusBCD complex contains 2 copies each of TusB, TusC and TusD. The TusBCD complex interacts with TusE.

It is found in the cytoplasm. In terms of biological role, part of a sulfur-relay system required for 2-thiolation of 5-methylaminomethyl-2-thiouridine (mnm(5)s(2)U) at tRNA wobble positions. Accepts sulfur from TusA and transfers it in turn to TusE. The polypeptide is Sulfurtransferase TusD (Cronobacter sakazakii (strain ATCC BAA-894) (Enterobacter sakazakii)).